The primary structure comprises 105 residues: Host transcription reprogramming factor 7 (105 aa).

The N-terminal stretch at 1 to 19 (MKTKTIFQLVALFAIGATA) is a signal peptide. Residues 69-95 (YWCRIGNCNAAFKSLAARCRHEKTAVH) form a C2H2-type zinc finger.

It localises to the secreted. The protein resides in the host nucleus. Functionally, probable secreted effector that translocates into the nuclei of host cells to reprogram the expression of targeted genes by binding on effector binding elements in rice. The chain is Host transcription reprogramming factor 7 from Pyricularia oryzae (strain 70-15 / ATCC MYA-4617 / FGSC 8958) (Rice blast fungus).